The sequence spans 1319 residues: METPPPDPVSPPPPAADEGSPGGDDGAEDAGGFSAGLDSLWTALFGSPEELEPMWSPPRGFGVGAEFAAAEVEPEIMDVAGGPWDGAPWRSSGVVAGEGAATALVPPTAAAGFAEFEPAAPIDSYPAGAAAASLGDVPEVSALDSGVDCSPDPPPSSSPPVDFDARGFDPVADSAPAMESPLPPSVASSEANLDGRMLDCTLNSVPSPPLASPYEVGLGAEDPIKDSSPSVAWGTTMDAKDPEVDATCANGTALRRSRRIMKIKSAASSMPLNQNGDSSRASKRRVADSRKSRSSEGSKLPAFTGPISVNTVDLINGVKVQGLQEIVAVENVSSSYDNNQKAGGLYNQVVVALPAASNSLLKDKGASVLPRRKTRLASKVLVNSDRVSAISPVVNGGPPVQKSDVCIPTKKHKLAVEECLTSLDGVDGGGIVLCNSKLKSAKSRVVSKTPQGRGRRSPQPPKTQRARTLSVKYLEKLKRAENNNNNGSMSKSPRVPMIPENNGSMSKSPRVPIIPELSTKHELVLDKHMVDSVMLETDDGSCFFVGDAVPDDEARKQWPHRYEINDQIMKKDKRTSSQTFANAGKAVLDVKCHYLQAKVSRYTFCIGECAFVKGPEGKPNYIGRLLEFFETKTGECYFRVQWFFTAEDTVIGEQAQSHDPRRLFYSDLTDDNLLDCIVSKVTIVQVPPSVDGKSKSVPSSDYYYDMKYSIDYSTFSTIEMEDTDDLMQSCYTSRINDKMKKIDVNKKHKSPVLEKMELSLLDLYCGCGGMSTGLCLGARGGGVNLSARWAIDDDEIACESFRNNHPETRVRNETTDDFLELLKEWEKLCKTYVKHSRTKACVDSTTESNNETPDCSTVPPEEFEVWKLVDICFGDPNKVSKHGLYFKVRWKGYGPHHDTWEPVEGLRNCKEAIRDFVIEGHRQRILPRPGDVDVVCGGPPCQGISGYNRNREFEAPFKCEKNKQIIVFMDVVQFLKPKYVYMENVLDILKFADATLARYALSRLVAMHYQARLGIMAAGCYGLPQFRMRVFLLGCHSKEKLPPFPLPTHEAIVKNGCPLAFERNLVGWPNDTPMQLARPIVLEDILSDLPEVANGESRDEMLYVKGPQTEFQRYIRSFNVEVHGPRAHVTKDSKSSKLYDHRPLVLDNDNYQRILQIPKRKGANFRDLSGVIVGPDNVARLDPTKERVLLPSGRPLVLDCILAYENGKSLRPFGRVWWDEVVGTVLTVPNARMQALIHPAQDRLLTIRESARLQGFPDNYRFRGTVKDRYRQIGNAVAVPVGRALGYALAMAYLKKSGDDPLMLLPPNFAFSHDLRGFA.

Over residues Met1 to Ala15 the composition is skewed to pro residues. 4 disordered regions span residues Met1–Ser34, Ala142–Ser189, Ser265–Ala302, and Lys442–Thr468. The segment covering Ala266–Ser279 has biased composition (polar residues). Positions Arg285–Glu296 are enriched in basic and acidic residues. A BAH domain is found at Tyr602–Glu719. Residues Leu758–Lys1296 form the SAM-dependent MTase C5-type domain. One can recognise a Chromo domain in the interval Phe863–Arg928. Cys941 is an active-site residue.

The protein resides in the nucleus. It carries out the reaction a 2'-deoxycytidine in DNA + S-adenosyl-L-methionine = a 5-methyl-2'-deoxycytidine in DNA + S-adenosyl-L-homocysteine + H(+). In terms of biological role, involved in CpXpG DNA methylation. In Oryza sativa subsp. japonica (Rice), this protein is DNA (cytosine-5)-methyltransferase CMT2.